The chain runs to 266 residues: MRYLLTNDDGIYARGLSALYSELSKDADCLIVAPEVERSAVGHAITLNRPLMVRRTKKDGNFLGYAVSGTPADCVKIGIKELSEKPVDLVVSGINIGANVGINVIYSGTVSAATEGAILGVPSMAISLGTLRNADYTFAAHFARTMARFIMKYFEKKSVALNINVPALPVQDIKGYAVTRQGKARLIESFDRRVDPRERLYYWLAGETQLSEQEEPDSDGSALSRGMISITPIYHDMTRYDALDGLKALLSKETSLLPVAKCDFQD.

A divalent metal cation is bound by residues D8, D9, S39, and N95.

Belongs to the SurE nucleotidase family. A divalent metal cation is required as a cofactor.

The protein localises to the cytoplasm. It catalyses the reaction a ribonucleoside 5'-phosphate + H2O = a ribonucleoside + phosphate. Its function is as follows. Nucleotidase that shows phosphatase activity on nucleoside 5'-monophosphates. The chain is 5'-nucleotidase SurE from Syntrophus aciditrophicus (strain SB).